A 328-amino-acid chain; its full sequence is Phosphate acyltransferase (328 aa).

It belongs to the PlsX family. Homodimer. Probably interacts with PlsY.

It is found in the cytoplasm. It catalyses the reaction a fatty acyl-[ACP] + phosphate = an acyl phosphate + holo-[ACP]. Its pathway is lipid metabolism; phospholipid metabolism. Its function is as follows. Catalyzes the reversible formation of acyl-phosphate (acyl-PO(4)) from acyl-[acyl-carrier-protein] (acyl-ACP). This enzyme utilizes acyl-ACP as fatty acyl donor, but not acyl-CoA. This Mycoplasma pneumoniae (strain ATCC 29342 / M129 / Subtype 1) (Mycoplasmoides pneumoniae) protein is Phosphate acyltransferase.